The following is a 167-amino-acid chain: NAD(P)H-quinone oxidoreductase subunit I, chloroplastic (167 aa).

4Fe-4S ferredoxin-type domains are found at residues 55–84 (GRIHFEFDKCIACEVCVRVCPIDLPVVDWK) and 95–124 (LNYSIDFGICIFCGNCVEYCPTNCLSMTEE). [4Fe-4S] cluster-binding residues include cysteine 64, cysteine 67, cysteine 70, cysteine 74, cysteine 104, cysteine 107, cysteine 110, and cysteine 114.

It belongs to the complex I 23 kDa subunit family. As to quaternary structure, NDH is composed of at least 16 different subunits, 5 of which are encoded in the nucleus. Requires [4Fe-4S] cluster as cofactor.

The protein localises to the plastid. It is found in the chloroplast thylakoid membrane. It carries out the reaction a plastoquinone + NADH + (n+1) H(+)(in) = a plastoquinol + NAD(+) + n H(+)(out). The enzyme catalyses a plastoquinone + NADPH + (n+1) H(+)(in) = a plastoquinol + NADP(+) + n H(+)(out). NDH shuttles electrons from NAD(P)H:plastoquinone, via FMN and iron-sulfur (Fe-S) centers, to quinones in the photosynthetic chain and possibly in a chloroplast respiratory chain. The immediate electron acceptor for the enzyme in this species is believed to be plastoquinone. Couples the redox reaction to proton translocation, and thus conserves the redox energy in a proton gradient. In Aethionema grandiflorum (Persian stone-cress), this protein is NAD(P)H-quinone oxidoreductase subunit I, chloroplastic.